Here is a 280-residue protein sequence, read N- to C-terminus: Pre-mRNA-splicing factor PRP21 (280 aa).

The SURP motif 1 repeat unit spans residues 11–49; that stretch reads DIKTTVNYIKQHGVEFENKLLEDERFSFIKKDDPLHEYY. A disordered region spans residues 53–72; the sequence is MNEPTDTVSGEDNDRKSERE. One copy of the SURP motif 2 repeat lies at 95–135; it reads VIKLTARYYAKDKSIVEQMISKDGEARLNFMNSSHPLHKTF. 2 stretches are compositionally biased toward basic and acidic residues: residues 246–261 and 269–280; these read EKIV…GDSK and AVGETRLKKSKK. The interval 246 to 280 is disordered; the sequence is EKIVSDQGKQKGGDSKGKKRKIRAVGETRLKKSKK.

As to quaternary structure, belongs to the CWC complex (or CEF1-associated complex), a spliceosome sub-complex reminiscent of a late-stage spliceosome composed of the U2, U5 and U6 snRNAs and at least BUD13, BUD31, BRR2, CDC40, CEF1, CLF1, CUS1, CWC2, CWC15, CWC21, CWC22, CWC23, CWC24, CWC25, CWC27, ECM2, HSH155, IST3, ISY1, LEA1, MSL1, NTC20, PRP8, PRP9, PRP11, PRP19, PRP21, PRP22, PRP45, PRP46, SLU7, SMB1, SMD1, SMD2, SMD3, SMX2, SMX3, SNT309, SNU114, SPP2, SYF1, SYF2, RSE1 and YJU2.

The protein localises to the nucleus. MRNA splicing factors, PRP9, PRP11, and PRP21, are necessary for binding of the U2 snRNP to the pre-mRNA in an early step of spliceosome assembly. The polypeptide is Pre-mRNA-splicing factor PRP21 (PRP21) (Saccharomyces cerevisiae (strain ATCC 204508 / S288c) (Baker's yeast)).